We begin with the raw amino-acid sequence, 493 residues long: Ribosomal protein uS12 methylthiotransferase RimO (493 aa).

Positions 5–121 (RTVALVTLGC…ISDRLQTILN (117 aa)) constitute an MTTase N-terminal domain. [4Fe-4S] cluster contacts are provided by C14, C50, C84, C198, C202, and C205. The Radical SAM core domain maps to 184–415 (LGTSPVASVK…QLAEELTSQR (232 aa)). The TRAM domain maps to 417 to 487 (EERVGETLQV…GVDLVAEHHE (71 aa)).

The protein belongs to the methylthiotransferase family. RimO subfamily. Requires [4Fe-4S] cluster as cofactor.

It is found in the cytoplasm. It catalyses the reaction L-aspartate(89)-[ribosomal protein uS12]-hydrogen + (sulfur carrier)-SH + AH2 + 2 S-adenosyl-L-methionine = 3-methylsulfanyl-L-aspartate(89)-[ribosomal protein uS12]-hydrogen + (sulfur carrier)-H + 5'-deoxyadenosine + L-methionine + A + S-adenosyl-L-homocysteine + 2 H(+). Functionally, catalyzes the methylthiolation of an aspartic acid residue of ribosomal protein uS12. In Streptomyces griseus subsp. griseus (strain JCM 4626 / CBS 651.72 / NBRC 13350 / KCC S-0626 / ISP 5235), this protein is Ribosomal protein uS12 methylthiotransferase RimO.